Consider the following 176-residue polypeptide: Zinc finger protein 428 (176 aa).

The disordered stretch occupies residues 1 to 152 (MTETREPTET…EEEGGTYHCT (152 aa)). Acidic residues predominate over residues 16–46 (LEEDDEDLSPEPDSEEEEEEEEEETTDDPEY). Threonine 96 carries the phosphothreonine modification. The span at 126-138 (PSRTGETRPAGRD) shows a compositional bias: basic and acidic residues. The C2H2-type zinc-finger motif lies at 149–171 (YHCTECEDSFDNLGELHGHFMLH).

The polypeptide is Zinc finger protein 428 (Znf428) (Mus musculus (Mouse)).